The primary structure comprises 184 residues: Cathelicidin-related peptide Pt_CRAMP1 (184 aa).

Residues 1–22 (MEGFFWKTWLVVAAFAIGGTSS) form the signal peptide. A propeptide spanning residues 23-150 (LPHKPLTYEE…EDEKDQPRRV (128 aa)) is cleaved from the precursor. 2 disulfides stabilise this stretch: Cys81–Cys92 and Cys103–Cys120. The span at 125–144 (EDEEQNQEEEEEEEKEEDEK) shows a compositional bias: acidic residues. The interval 125–147 (EDEEQNQEEEEEEEKEEDEKDQP) is disordered.

It belongs to the cathelicidin family. As to expression, expressed by the venom gland.

It localises to the secreted. The protein localises to the target cell membrane. Its function is as follows. Potent antimicrobial peptide against Gram-negative (MIC=2 ug/ml against E.coli ATCC 25922, MIC=8 ug/ml against P.aeruginosa) and Gram-positive bacteria (MIC=32 ug/ml against E.faecalis, MIC=32 ug/ml against S.aureus). Adopts an amphipathic alpha helical conformation, that may allow to partition into the target membrane. High hemolytic activities have been observed on mammalian cells. This is Cathelicidin-related peptide Pt_CRAMP1 from Pseudonaja textilis (Eastern brown snake).